The primary structure comprises 214 residues: Heat shock protein 30 (214 aa).

Positions 66–183 (VPSSLTIQPV…AERVVPINCS (118 aa)) constitute a sHSP domain. The interval 193-214 (SKTEGSITDTQKKQENTISKED) is disordered. Over residues 202–214 (TQKKQENTISKED) the composition is skewed to basic and acidic residues.

It belongs to the small heat shock protein (HSP20) family.

The sequence is that of Heat shock protein 30 (hsp30) from Oncorhynchus tshawytscha (Chinook salmon).